The primary structure comprises 845 residues: AdoMet-dependent rRNA methyltransferase SPB1 (845 aa).

Residues Gly58, Trp60, Asp78, Asp94, and Asp119 each contribute to the S-adenosyl-L-methionine site. Lys159 (proton acceptor) is an active-site residue. Disordered stretches follow at residues 223-247 (GGGN…SQRQ) and 279-298 (SLNK…DDDH). Coiled coils occupy residues 366–402 (TEEQ…KEII) and 464–502 (DEEE…ERDA). Basic and acidic residues predominate over residues 496–512 (RKAERDANYRAKQARGD). Disordered stretches follow at residues 496–546 (RKAE…DDDE), 587–660 (ENKT…HQQK), and 788–821 (KLNK…VKGK). Acidic residues-rich tracts occupy residues 513-528 (ADDE…NDDV), 536-545 (MESESDDDDD), 610-624 (NEND…ESDF), and 633-648 (DDDD…DDEV). A coiled-coil region spans residues 739-796 (IKKVLEAQSRKKLRALKRLEKIKKKSDLINEDSGKSERDKADEISKLMKKLNKKQKQK). A compositionally biased stretch (basic residues) spans 788–797 (KLNKKQKQKP).

The protein belongs to the class I-like SAM-binding methyltransferase superfamily. RNA methyltransferase RlmE family. SPB1 subfamily. As to quaternary structure, component of the nucleolar and nucleoplasmic pre-60S ribosomal particle.

The protein localises to the nucleus. Its subcellular location is the nucleolus. It catalyses the reaction a ribonucleotide in rRNA + S-adenosyl-L-methionine = a 2'-O-methylribonucleotide in rRNA + S-adenosyl-L-homocysteine + H(+). Its function is as follows. Required for proper assembly of pre-ribosomal particles during the biogenesis of the 60S ribosomal subunit. This chain is AdoMet-dependent rRNA methyltransferase SPB1, found in Candida albicans (strain SC5314 / ATCC MYA-2876) (Yeast).